The following is an 811-amino-acid chain: G-type lectin S-receptor-like serine/threonine-protein kinase LECRK2 (811 aa).

A signal peptide spans 1-23; that stretch reads MAPILFLPILQILLIYCTKSAQA. One can recognise a Bulb-type lectin domain in the interval 24–153; the sequence is QLNISIGSSL…DGATKWESFG (130 aa). The Extracellular segment spans residues 24-464; sequence QLNISIGSSL…DKKYWILGSS (441 aa). N-linked (GlcNAc...) asparagine glycans are attached at residues Asn26, Asn39, Asn59, Asn219, Asn226, Asn237, and Asn242. One can recognise an EGF-like; atypical domain in the interval 292–344; it reads PENICQTIQTKVGSGACGFNSYCTFDGTKNTTNCLCPQRYKFFDNERTYKGCR. Disulfide bonds link Cys296–Cys314, Cys308–Cys325, Cys327–Cys343, Cys389–Cys411, and Cys393–Cys399. N-linked (GlcNAc...) asparagine glycosylation occurs at Asn321. Residues 352–436 form the PAN domain; it reads CDLDETAAMV…LQATVLLKVP (85 aa). The chain crosses the membrane as a helical span at residues 465 to 485; sequence LFFGSSVLVNFLLIFVLLFGT. Topologically, residues 486-811 are cytoplasmic; the sequence is YCSITSRKKT…DPSSYISSLA (326 aa). The region spanning 521–795 is the Protein kinase domain; the sequence is GGFHEVLGTG…KVMQMLDGAV (275 aa). ATP-binding positions include 527 to 535 and Lys551; that span reads LGTGASGIV. The Proton acceptor role is filled by Asp645.

It belongs to the protein kinase superfamily. Ser/Thr protein kinase family.

The protein resides in the membrane. It carries out the reaction L-seryl-[protein] + ATP = O-phospho-L-seryl-[protein] + ADP + H(+). The catalysed reaction is L-threonyl-[protein] + ATP = O-phospho-L-threonyl-[protein] + ADP + H(+). Functionally, involved in resistance against the herbivorous insect brown planthopper (N.lugens, BPH). Member of the BPH3 (BPH resistance locus 3) cluster which contains LECRK1, LECRK2 and LECRK3. This Oryza sativa subsp. indica (Rice) protein is G-type lectin S-receptor-like serine/threonine-protein kinase LECRK2.